The sequence spans 182 residues: Putative manganese efflux pump MntP (182 aa).

6 helical membrane passes run 6–26 (LIPLIIMAFALGMDAFSVSLG), 37–57 (ILYIGMTIGIFHIIMPFIGMV), 72–92 (FAGAILLIGLGFYIVYSSILE), 101–121 (IGISLFVFAFGVSIDSFSVGL), 131–151 (IITILLFGLISMLLAWMGLLL), and 162–182 (YGEIVGGIILVGFGLYLLFPI).

Belongs to the MntP (TC 9.B.29) family.

Its subcellular location is the cell membrane. Probably functions as a manganese efflux pump. The chain is Putative manganese efflux pump MntP from Bacillus mycoides (strain KBAB4) (Bacillus weihenstephanensis).